We begin with the raw amino-acid sequence, 421 residues long: Acetate kinase (421 aa).

Asn7 lines the Mg(2+) pocket. Residue Lys14 coordinates ATP. Residue Arg91 coordinates substrate. The active-site Proton donor/acceptor is the Asp148. ATP-binding positions include 208–212 and 283–285; these read HIGNG and DRR. Glu387 provides a ligand contact to Mg(2+).

It belongs to the acetokinase family. Homodimer. Requires Mg(2+) as cofactor. It depends on Mn(2+) as a cofactor.

It localises to the cytoplasm. It carries out the reaction acetate + ATP = acetyl phosphate + ADP. It participates in metabolic intermediate biosynthesis; acetyl-CoA biosynthesis; acetyl-CoA from acetate: step 1/2. Its function is as follows. Catalyzes the formation of acetyl phosphate from acetate and ATP. Can also catalyze the reverse reaction. In Trichlorobacter lovleyi (strain ATCC BAA-1151 / DSM 17278 / SZ) (Geobacter lovleyi), this protein is Acetate kinase.